A 400-amino-acid chain; its full sequence is Formate-dependent phosphoribosylglycinamide formyltransferase (400 aa).

N(1)-(5-phospho-beta-D-ribosyl)glycinamide is bound by residues Glu22 to Leu23 and Glu82. ATP contacts are provided by residues Arg115, Lys157, Ser162 to Gln167, Glu197 to Val200, and Glu205. Residues Arg120–Leu315 form the ATP-grasp domain. 2 residues coordinate Mg(2+): Glu274 and Glu286. N(1)-(5-phospho-beta-D-ribosyl)glycinamide contacts are provided by residues Asp293, Lys362, and Arg369–Arg370.

This sequence belongs to the PurK/PurT family. As to quaternary structure, homodimer.

The enzyme catalyses N(1)-(5-phospho-beta-D-ribosyl)glycinamide + formate + ATP = N(2)-formyl-N(1)-(5-phospho-beta-D-ribosyl)glycinamide + ADP + phosphate + H(+). Its pathway is purine metabolism; IMP biosynthesis via de novo pathway; N(2)-formyl-N(1)-(5-phospho-D-ribosyl)glycinamide from N(1)-(5-phospho-D-ribosyl)glycinamide (formate route): step 1/1. Functionally, involved in the de novo purine biosynthesis. Catalyzes the transfer of formate to 5-phospho-ribosyl-glycinamide (GAR), producing 5-phospho-ribosyl-N-formylglycinamide (FGAR). Formate is provided by PurU via hydrolysis of 10-formyl-tetrahydrofolate. In Mycolicibacterium vanbaalenii (strain DSM 7251 / JCM 13017 / BCRC 16820 / KCTC 9966 / NRRL B-24157 / PYR-1) (Mycobacterium vanbaalenii), this protein is Formate-dependent phosphoribosylglycinamide formyltransferase.